Here is a 215-residue protein sequence, read N- to C-terminus: Pyridoxine/pyridoxamine 5'-phosphate oxidase (215 aa).

Substrate-binding positions include 9 to 12 (RRDY) and K69. Residues 64-69 (RVLLLK), 79-80 (FT), K86, and Q108 each bind FMN. 3 residues coordinate substrate: Y126, R130, and S134. Residues 143–144 (QS) and W188 contribute to the FMN site. Residue 194 to 196 (RLH) coordinates substrate. FMN is bound at residue R198.

This sequence belongs to the pyridoxamine 5'-phosphate oxidase family. As to quaternary structure, homodimer. It depends on FMN as a cofactor.

It carries out the reaction pyridoxamine 5'-phosphate + O2 + H2O = pyridoxal 5'-phosphate + H2O2 + NH4(+). It catalyses the reaction pyridoxine 5'-phosphate + O2 = pyridoxal 5'-phosphate + H2O2. Its pathway is cofactor metabolism; pyridoxal 5'-phosphate salvage; pyridoxal 5'-phosphate from pyridoxamine 5'-phosphate: step 1/1. It participates in cofactor metabolism; pyridoxal 5'-phosphate salvage; pyridoxal 5'-phosphate from pyridoxine 5'-phosphate: step 1/1. Functionally, catalyzes the oxidation of either pyridoxine 5'-phosphate (PNP) or pyridoxamine 5'-phosphate (PMP) into pyridoxal 5'-phosphate (PLP). This Pseudomonas putida (strain W619) protein is Pyridoxine/pyridoxamine 5'-phosphate oxidase.